Here is a 342-residue protein sequence, read N- to C-terminus: Isopentenyl-diphosphate delta-isomerase (342 aa).

Residue 11–12 (RK) coordinates substrate. Residues S68, 69 to 71 (SMT), S99, and N127 contribute to the FMN site. Position 99–101 (99–101 (SMR)) interacts with substrate. Residue Q162 coordinates substrate. Position 163 (E163) interacts with Mg(2+). Residues K194, T224, 274 to 276 (GLK), and 295 to 296 (AG) each bind FMN.

This sequence belongs to the IPP isomerase type 2 family. In terms of assembly, homooctamer. Dimer of tetramers. It depends on FMN as a cofactor. Requires NADPH as cofactor. The cofactor is Mg(2+).

It is found in the cytoplasm. It catalyses the reaction isopentenyl diphosphate = dimethylallyl diphosphate. Its function is as follows. Involved in the biosynthesis of isoprenoids. Catalyzes the 1,3-allylic rearrangement of the homoallylic substrate isopentenyl (IPP) to its allylic isomer, dimethylallyl diphosphate (DMAPP). This is Isopentenyl-diphosphate delta-isomerase from Rickettsia peacockii (strain Rustic).